Consider the following 964-residue polypeptide: Translation initiation factor IF-2 (964 aa).

The segment at alanine 26–proline 375 is disordered. Composition is skewed to basic and acidic residues over residues tyrosine 49 to serine 60, valine 91 to lysine 103, alanine 118 to proline 154, isoleucine 174 to glutamine 206, proline 225 to glycine 236, arginine 243 to glycine 252, and lysine 328 to lysine 339. One can recognise a tr-type G domain in the interval proline 464–lysine 633. The interval glycine 473–threonine 480 is G1. Glycine 473–threonine 480 provides a ligand contact to GTP. Residues glycine 498–histidine 502 form a G2 region. The interval aspartate 519–glycine 522 is G3. GTP is bound by residues aspartate 519–histidine 523 and asparagine 573–aspartate 576. Positions asparagine 573 to aspartate 576 are G4. The interval serine 609–lysine 611 is G5.

It belongs to the TRAFAC class translation factor GTPase superfamily. Classic translation factor GTPase family. IF-2 subfamily.

The protein localises to the cytoplasm. Functionally, one of the essential components for the initiation of protein synthesis. Protects formylmethionyl-tRNA from spontaneous hydrolysis and promotes its binding to the 30S ribosomal subunits. Also involved in the hydrolysis of GTP during the formation of the 70S ribosomal complex. The chain is Translation initiation factor IF-2 from Chromobacterium violaceum (strain ATCC 12472 / DSM 30191 / JCM 1249 / CCUG 213 / NBRC 12614 / NCIMB 9131 / NCTC 9757 / MK).